A 520-amino-acid polypeptide reads, in one-letter code: 2,3-bisphosphoglycerate-independent phosphoglycerate mutase (520 aa).

Mn(2+)-binding residues include Asp-13 and Ser-63. The active-site Phosphoserine intermediate is Ser-63. Residues His-124, 154 to 155 (RD), Arg-192, Arg-198, 268 to 271 (RADR), and Lys-342 each bind substrate. Asp-409, His-413, Asp-450, His-451, and His-469 together coordinate Mn(2+).

Belongs to the BPG-independent phosphoglycerate mutase family. Monomer. Requires Mn(2+) as cofactor.

It catalyses the reaction (2R)-2-phosphoglycerate = (2R)-3-phosphoglycerate. Its pathway is carbohydrate degradation; glycolysis; pyruvate from D-glyceraldehyde 3-phosphate: step 3/5. Its function is as follows. Catalyzes the interconversion of 2-phosphoglycerate and 3-phosphoglycerate. This chain is 2,3-bisphosphoglycerate-independent phosphoglycerate mutase, found in Colwellia psychrerythraea (strain 34H / ATCC BAA-681) (Vibrio psychroerythus).